A 411-amino-acid polypeptide reads, in one-letter code: Phosphopentomutase (411 aa).

Residues Asp14, Asp306, His311, Asp347, His348, and His359 each coordinate Mn(2+).

The protein belongs to the phosphopentomutase family. The cofactor is Mn(2+).

Its subcellular location is the cytoplasm. The enzyme catalyses 2-deoxy-alpha-D-ribose 1-phosphate = 2-deoxy-D-ribose 5-phosphate. It carries out the reaction alpha-D-ribose 1-phosphate = D-ribose 5-phosphate. The protein operates within carbohydrate degradation; 2-deoxy-D-ribose 1-phosphate degradation; D-glyceraldehyde 3-phosphate and acetaldehyde from 2-deoxy-alpha-D-ribose 1-phosphate: step 1/2. Functionally, isomerase that catalyzes the conversion of deoxy-ribose 1-phosphate (dRib-1-P) and ribose 1-phosphate (Rib-1-P) to deoxy-ribose 5-phosphate (dRib-5-P) and ribose 5-phosphate (Rib-5-P), respectively. The protein is Phosphopentomutase of Lactococcus lactis subsp. cremoris (strain SK11).